We begin with the raw amino-acid sequence, 373 residues long: Phospho-N-acetylmuramoyl-pentapeptide-transferase (373 aa).

10 helical membrane passes run G34–L54, T78–A98, L100–F120, L141–S161, F181–G201, G212–A232, L252–P272, A275–V295, I301–V321, and Q350–L370.

Belongs to the glycosyltransferase 4 family. MraY subfamily. The cofactor is Mg(2+).

It is found in the cell inner membrane. The enzyme catalyses UDP-N-acetyl-alpha-D-muramoyl-L-alanyl-gamma-D-glutamyl-meso-2,6-diaminopimeloyl-D-alanyl-D-alanine + di-trans,octa-cis-undecaprenyl phosphate = di-trans,octa-cis-undecaprenyl diphospho-N-acetyl-alpha-D-muramoyl-L-alanyl-D-glutamyl-meso-2,6-diaminopimeloyl-D-alanyl-D-alanine + UMP. It functions in the pathway cell wall biogenesis; peptidoglycan biosynthesis. In terms of biological role, catalyzes the initial step of the lipid cycle reactions in the biosynthesis of the cell wall peptidoglycan: transfers peptidoglycan precursor phospho-MurNAc-pentapeptide from UDP-MurNAc-pentapeptide onto the lipid carrier undecaprenyl phosphate, yielding undecaprenyl-pyrophosphoryl-MurNAc-pentapeptide, known as lipid I. The polypeptide is Phospho-N-acetylmuramoyl-pentapeptide-transferase (Rhizobium rhizogenes (strain K84 / ATCC BAA-868) (Agrobacterium radiobacter)).